An 86-amino-acid polypeptide reads, in one-letter code: Protein Vpu (86 aa).

Residues 1–12 are Extracellular-facing; it reads MLELIGRIDYRL. Residues 13-33 traverse the membrane as a helical segment; that stretch reads GVGALIVALIIVIIVWTIAYI. At 34-86 the chain is on the cytoplasmic side; sequence EYRKLVRQRRIDWLVKRIKERAEDSGNESGGDTEELETMVDMGHLRLLDGNDL. Residues Ser-58 and Ser-62 each carry the phosphoserine; by host CK2 modification.

It belongs to the HIV-1 VPU protein family. As to quaternary structure, homopentamer. Interacts with host CD4 and BRTC; these interactions induce proteasomal degradation of CD4. Interacts with host BST2; this interaction leads to the degradation of host BST2. Interacts with host FBXW11. Interacts with host AP1M1; this interaction plays a role in the mistrafficking and subsequent degradation of host BST2. Interacts with host RANBP2; this interaction allows Vpu to down-regulate host BLM sumoylation. Post-translationally, phosphorylated by host CK2. This phosphorylation is necessary for interaction with human BTRC and degradation of CD4.

It localises to the host membrane. Its activity is regulated as follows. Ion channel activity is inhibited by hexamethylene amiloride in vitro. Functionally, enhances virion budding, by targeting human CD4 and Tetherin/BST2 to proteasome degradation. Degradation of CD4 prevents any unwanted premature interactions between viral Env and its host receptor CD4 in the endoplasmic reticulum. Degradation of antiretroviral protein Tetherin/BST2 is important for virion budding, as BST2 tethers new viral particles to the host cell membrane. Mechanistically, Vpu bridges either CD4 or BST2 to BTRC, a substrate recognition subunit of the Skp1/Cullin/F-box protein E3 ubiquitin ligase, induces their ubiquitination and subsequent proteasomal degradation. The alteration of the E3 ligase specificity by Vpu seems to promote the degradation of host IKBKB, leading to NF-kappa-B down-regulation and subsequent apoptosis. Acts as a viroporin that forms an oligomeric ion channel in membranes. Modulates the host DNA repair mechanisms to promote degradation of nuclear viral cDNA in cells that are already productively infected in order to suppress immune sensing and proviral hyper-integration (superinfection). Manipulates PML-NBs and modulates SUMOylation of host BLM protein thereby enhancing its DNA-end processing activity toward viral unintegrated linear DNA. Also inhibits RAD52-mediated homologous repair of viral cDNA, preventing the generation of dead-end circular forms of single copies of the long terminal repeat and permitting sustained nucleolytic attack. The polypeptide is Protein Vpu (Homo sapiens (Human)).